Here is a 482-residue protein sequence, read N- to C-terminus: tRNA sulfurtransferase (482 aa).

Residues 61 to 165 (LAIRDALTRI…DDRLLLIKGR (105 aa)) enclose the THUMP domain. Residues 183–184 (LI), Lys-265, Gly-287, and Gln-296 contribute to the ATP site. Cys-344 and Cys-456 are joined by a disulfide. The 79-residue stretch at 404-482 (FGANDVILDI…GFANVKVYRP (79 aa)) folds into the Rhodanese domain. Cys-456 acts as the Cysteine persulfide intermediate in catalysis.

It belongs to the ThiI family.

It is found in the cytoplasm. It carries out the reaction [ThiI sulfur-carrier protein]-S-sulfanyl-L-cysteine + a uridine in tRNA + 2 reduced [2Fe-2S]-[ferredoxin] + ATP + H(+) = [ThiI sulfur-carrier protein]-L-cysteine + a 4-thiouridine in tRNA + 2 oxidized [2Fe-2S]-[ferredoxin] + AMP + diphosphate. The catalysed reaction is [ThiS sulfur-carrier protein]-C-terminal Gly-Gly-AMP + S-sulfanyl-L-cysteinyl-[cysteine desulfurase] + AH2 = [ThiS sulfur-carrier protein]-C-terminal-Gly-aminoethanethioate + L-cysteinyl-[cysteine desulfurase] + A + AMP + 2 H(+). It participates in cofactor biosynthesis; thiamine diphosphate biosynthesis. Functionally, catalyzes the ATP-dependent transfer of a sulfur to tRNA to produce 4-thiouridine in position 8 of tRNAs, which functions as a near-UV photosensor. Also catalyzes the transfer of sulfur to the sulfur carrier protein ThiS, forming ThiS-thiocarboxylate. This is a step in the synthesis of thiazole, in the thiamine biosynthesis pathway. The sulfur is donated as persulfide by IscS. This chain is tRNA sulfurtransferase, found in Salmonella arizonae (strain ATCC BAA-731 / CDC346-86 / RSK2980).